We begin with the raw amino-acid sequence, 739 residues long: Lysine decarboxylase (739 aa).

Residue K367 is modified to N6-(pyridoxal phosphate)lysine. Basic and acidic residues predominate over residues 714–726; that stretch reads ADEPGDKPSDTVK. The segment at 714-739 is disordered; that stretch reads ADEPGDKPSDTVKKAPGKKPSAAKKS. The span at 728–739 shows a compositional bias: basic residues; it reads APGKKPSAAKKS.

This sequence belongs to the Orn/Lys/Arg decarboxylase class-I family. Pyridoxal 5'-phosphate is required as a cofactor.

Its subcellular location is the cytoplasm. It catalyses the reaction L-lysine + H(+) = cadaverine + CO2. This is Lysine decarboxylase from Hafnia alvei.